A 307-amino-acid polypeptide reads, in one-letter code: Acetyl-coenzyme A carboxylase carboxyl transferase subunit beta (307 aa).

In terms of domain architecture, CoA carboxyltransferase N-terminal spans 28–297 (LWVKCPDTGQ…TPQPGTAPEP (270 aa)). A disordered region spans residues 286 to 307 (RRTPQPGTAPEPTTPEPLPNAA). The span at 292–307 (GTAPEPTTPEPLPNAA) shows a compositional bias: pro residues.

The protein belongs to the AccD/PCCB family. In terms of assembly, acetyl-CoA carboxylase is a heterohexamer composed of biotin carboxyl carrier protein (AccB), biotin carboxylase (AccC) and two subunits each of ACCase subunit alpha (AccA) and ACCase subunit beta (AccD).

Its subcellular location is the cytoplasm. It catalyses the reaction N(6)-carboxybiotinyl-L-lysyl-[protein] + acetyl-CoA = N(6)-biotinyl-L-lysyl-[protein] + malonyl-CoA. Its pathway is lipid metabolism; malonyl-CoA biosynthesis; malonyl-CoA from acetyl-CoA: step 1/1. Functionally, component of the acetyl coenzyme A carboxylase (ACC) complex. Biotin carboxylase (BC) catalyzes the carboxylation of biotin on its carrier protein (BCCP) and then the CO(2) group is transferred by the transcarboxylase to acetyl-CoA to form malonyl-CoA. This chain is Acetyl-coenzyme A carboxylase carboxyl transferase subunit beta, found in Methylorubrum extorquens (strain CM4 / NCIMB 13688) (Methylobacterium extorquens).